A 528-amino-acid polypeptide reads, in one-letter code: Probable serine protease HtrA1 (528 aa).

The interval 1–70 (MDTRVDTDNA…RPSGVQGSFV (70 aa)) is disordered. Residues 1 to 178 (MDTRVDTDNA…DVLFGGKVSY (178 aa)) lie on the Cytoplasmic side of the membrane. Over residues 31–40 (NNGGPNGGGR) the composition is skewed to gly residues. A helical transmembrane segment spans residues 179 to 199 (LALGILVAIALVIGGIGGVIG). Topologically, residues 200–528 (RKTAEVVDAF…LTVKPDPDST (329 aa)) are periplasmic. Catalysis depends on charge relay system residues His-270, Asp-306, and Ser-387. In terms of domain architecture, PDZ spans 426-487 (LVANSLIKDG…VIVKVGNRAV (62 aa)).

This sequence belongs to the peptidase S1C family. As to quaternary structure, the C-terminal region exhibits both monomeric and trimeric forms in solution.

Its subcellular location is the cell inner membrane. It catalyses the reaction Acts on substrates that are at least partially unfolded. The cleavage site P1 residue is normally between a pair of hydrophobic residues, such as Val-|-Val.. In terms of biological role, essential protein that may act as a regulatory protease that is conditionally activated upon appropriate environmental triggers. This is Probable serine protease HtrA1 from Mycobacterium tuberculosis (strain ATCC 25618 / H37Rv).